The sequence spans 352 residues: tRNA pseudouridine synthase D (352 aa).

Aspartate 81 functions as the Nucleophile in the catalytic mechanism. A TRUD domain is found at 157-303 (GIPNYFGAQR…MEHERRILRL (147 aa)).

This sequence belongs to the pseudouridine synthase TruD family.

It catalyses the reaction uridine(13) in tRNA = pseudouridine(13) in tRNA. Functionally, responsible for synthesis of pseudouridine from uracil-13 in transfer RNAs. This is tRNA pseudouridine synthase D from Pseudomonas syringae pv. syringae (strain B728a).